The following is a 184-amino-acid chain: Endoribonuclease YbeY (184 aa).

Residues H118, H122, and H128 each contribute to the Zn(2+) site.

Belongs to the endoribonuclease YbeY family. The cofactor is Zn(2+).

It is found in the cytoplasm. In terms of biological role, single strand-specific metallo-endoribonuclease involved in late-stage 70S ribosome quality control and in maturation of the 3' terminus of the 16S rRNA. This chain is Endoribonuclease YbeY, found in Nocardia farcinica (strain IFM 10152).